We begin with the raw amino-acid sequence, 589 residues long: Ubiquilin-1 (589 aa).

Residues 1–11 (MAESGESGGPP) show a composition bias toward gly residues. 2 disordered regions span residues 1-35 (MAESGESGGPPGSQDSAAGAEGAGAPAAAASAEPK) and 110-145 (NRPQDHSAQQTNTAGSNVTTSSTPNSNSTSGSATSN). A2 carries the N-acetylalanine modification. Low complexity predominate over residues 12 to 35 (GSQDSAAGAEGAGAPAAAASAEPK). In terms of domain architecture, Ubiquitin-like spans 37-111 (MKVTVKTPKE…VHLVIKTQNR (75 aa)). Residues 110–124 (NRPQDHSAQQTNTAG) show a composition bias toward polar residues. A compositionally biased stretch (low complexity) spans 125–145 (SNVTTSSTPNSNSTSGSATSN). Residues 178 to 428 (QLLSNPEMMV…LNNPLFAGNP (251 aa)) are interaction with UBXN4. 2 STI1 domains span residues 182–210 (NPEMMVQIMENPFVQSMLSNPDLMRQLIM) and 212–251 (NPQMQQLIQRNPEISHMLNNPDIMRQTLELARNPAMMQEM). The interval 295–371 (PFASLVSNTS…NLVPGVGASM (77 aa)) is disordered. Positions 299-313 (LVSNTSSGEGSQPSR) are enriched in polar residues. Over residues 327-360 (QTSQSSSASSGTASTVGGTTGSTASGTSGQSTTA) the composition is skewed to low complexity. STI1 domains lie at 387-434 (NPQL…QEQM) and 438-470 (LPTFLQQMQNPDTLSAMSNPRAMQALLQIQQGL). Residues 488–520 (LGALGSTGGSSGTNGSNATPSENTSPTAGTTEP) are disordered. The segment covering 489–499 (GALGSTGGSSG) has biased composition (gly residues). The segment covering 509–520 (ENTSPTAGTTEP) has biased composition (polar residues). The UBA domain occupies 546-586 (RFQQQLEQLSAMGFLNREANLQALIATGGDINAAIERLLGS).

In terms of assembly, monomer and homodimer. Heterodimer with UBQLN2. Binds CD47, NBL1, GABRA1, GABRA2, GABRA3, GABRA6, GABRB1, GABRB2 and GABRB3. Binds UBE3A, BTRC, P4HB and MTOR. Interacts with the proteasome 19S subunit. Interacts (via ubiquitin-like domain) with TREX1; the interaction is direct and may control TREX1 subcellular location. Forms a complex with UBXN4 and VCP. Interacts (via UBA domain) with UBQLN4 (via ubiquitin-like domain). Found in a complex with UBQLN2 and MAP1LC3A/B/C. The monomeric form interacts with PSEN2. The monomeric form interacts with PSEN1. Interacts with ORAI1. Interacts (via UBA domain) with TICAM1. Interacts with EPS15. Interacts (via UBA domain) with UBA52 and (via ubiquitin-like domain) with PSMD3 and PSMD4. Interacts with HERPUD1. Interacts with MAP1LC3A/B/C in the presence of UBQLN4. Interacts (via ubiquitin-like domain) with EPS15 (via UIM domains) and both the ubiquitinated and non-ubiquitinated forms can interact with EPS15. Interacts (via ubiquitin-like domain) with EPS15L1, HGS (via UIM domain) and STAM2 (via UIM domain). Interacts with BCL2L10/BCL-B; in the cytoplasm. As to quaternary structure, monomeric form interacts with PSEN1. Post-translationally, degraded during both macroautophagy and during chaperone-mediated autophagy (CMA). In terms of processing, phosphorylated. Ubiquitinated. In terms of tissue distribution, brain (at protein level). Ubiquitous. Highly expressed throughout the brain; detected in neurons and in neuropathological lesions, such as neurofibrillary tangles and Lewy bodies. Highly expressed in heart, placenta, pancreas, lung, liver, skeletal muscle and kidney.

Its subcellular location is the cytoplasm. It localises to the nucleus. The protein localises to the endoplasmic reticulum. The protein resides in the cytoplasmic vesicle. It is found in the autophagosome. Its subcellular location is the cell membrane. Functionally, plays an important role in the regulation of different protein degradation mechanisms and pathways including ubiquitin-proteasome system (UPS), autophagy and endoplasmic reticulum-associated protein degradation (ERAD) pathway. Mediates the proteasomal targeting of misfolded or accumulated proteins for degradation by binding (via UBA domain) to their polyubiquitin chains and by interacting (via ubiquitin-like domain) with the subunits of the proteasome. Plays a role in the ERAD pathway via its interaction with ER-localized proteins UBXN4, VCP and HERPUD1 and may form a link between the polyubiquitinated ERAD substrates and the proteasome. Involved in the regulation of macroautophagy and autophagosome formation; required for maturation of autophagy-related protein LC3 from the cytosolic form LC3-I to the membrane-bound form LC3-II and may assist in the maturation of autophagosomes to autolysosomes by mediating autophagosome-lysosome fusion. Negatively regulates the TICAM1/TRIF-dependent toll-like receptor signaling pathway by decreasing the abundance of TICAM1 via the autophagic pathway. Promotes the ubiquitination and lysosomal degradation of ORAI1, consequently down-regulating the ORAI1-mediated Ca2+ mobilization. Suppresses the maturation and proteasomal degradation of amyloid beta A4 protein (A4) by stimulating the lysine 63 (K63)-linked polyubiquitination. Delays the maturation of A4 by sequestering it in the Golgi apparatus and preventing its transport to the cell surface for subsequent processing. Ubiquitinates BCL2L10 and thereby stabilizes protein abundance. In terms of biological role, plays a role in unfolded protein response (UPR) by attenuating the induction of UPR-inducible genes, DDTI3/CHOP, HSPA5 and PDIA2 during ER stress. Plays a key role in the regulation of the levels of PSEN1 by targeting its accumulation to aggresomes which may then be removed from cells by autophagocytosis. Plays a role in unfolded protein response (UPR) by attenuating the induction of UPR-inducible genes, DDTI3/CHOP, HSPA5 and PDIA2 during ER stress. The protein is Ubiquilin-1 (UBQLN1) of Homo sapiens (Human).